A 183-amino-acid chain; its full sequence is ATP-dependent protease subunit HslV (183 aa).

Threonine 13 is a catalytic residue. Na(+) contacts are provided by glycine 168, cysteine 171, and threonine 174.

Belongs to the peptidase T1B family. HslV subfamily. A double ring-shaped homohexamer of HslV is capped on each side by a ring-shaped HslU homohexamer. The assembly of the HslU/HslV complex is dependent on binding of ATP.

The protein localises to the cytoplasm. The catalysed reaction is ATP-dependent cleavage of peptide bonds with broad specificity.. Allosterically activated by HslU binding. In terms of biological role, protease subunit of a proteasome-like degradation complex believed to be a general protein degrading machinery. This Xanthomonas euvesicatoria pv. vesicatoria (strain 85-10) (Xanthomonas campestris pv. vesicatoria) protein is ATP-dependent protease subunit HslV.